Reading from the N-terminus, the 316-residue chain is IDS-like terpene synthase 2 (316 aa).

Asp69 and Asp73 together coordinate Mg(2+).

This sequence belongs to the FPP/GGPP synthase family. Requires Mg(2+) as cofactor.

The catalysed reaction is (2E)-geranyl diphosphate + H2O = linalool + diphosphate. The enzyme catalyses (2E,6E)-farnesyl diphosphate + H2O = (6E)-nerolidol + diphosphate. In terms of biological role, terpene synthase that shows monoterpene synthase activity and produces linalool, using geranyl diphosphate (GPP) as substrate. Also shows sesquiterpene synthase activity as it is able to convert farnesyl diphosphate (FPP) into (E)-nerolidol. This Melampsora larici-populina (strain 98AG31 / pathotype 3-4-7) (Poplar leaf rust fungus) protein is IDS-like terpene synthase 2.